We begin with the raw amino-acid sequence, 395 residues long: Chorismate synthase (395 aa).

NADP(+) contacts are provided by Arg40 and Arg46. FMN contacts are provided by residues 134–136 (RAS), 256–257 (QA), Gly301, 316–320 (KPIST), and Arg342.

It belongs to the chorismate synthase family. As to quaternary structure, homotetramer. Requires FMNH2 as cofactor.

It catalyses the reaction 5-O-(1-carboxyvinyl)-3-phosphoshikimate = chorismate + phosphate. The protein operates within metabolic intermediate biosynthesis; chorismate biosynthesis; chorismate from D-erythrose 4-phosphate and phosphoenolpyruvate: step 7/7. In terms of biological role, catalyzes the anti-1,4-elimination of the C-3 phosphate and the C-6 proR hydrogen from 5-enolpyruvylshikimate-3-phosphate (EPSP) to yield chorismate, which is the branch point compound that serves as the starting substrate for the three terminal pathways of aromatic amino acid biosynthesis. This reaction introduces a second double bond into the aromatic ring system. In Beutenbergia cavernae (strain ATCC BAA-8 / DSM 12333 / CCUG 43141 / JCM 11478 / NBRC 16432 / NCIMB 13614 / HKI 0122), this protein is Chorismate synthase.